The primary structure comprises 128 residues: MKQQSEVKSLKEGKFVIIDDEPCQIVSVQHSKPGKHGAAKARVDAIGLFDGSKRSIVQPVDAKIYVPIVERKNAQVISIAGNMAQLMDTADYSTFELEIPEDLQGKINQGEEVQYMAAMGKLKFSIRQ.

K35 is modified (hypusine).

It belongs to the eIF-5A family.

Its subcellular location is the cytoplasm. Its function is as follows. Functions by promoting the formation of the first peptide bond. This is Translation initiation factor 5A (eIF5A) from Methanocella arvoryzae (strain DSM 22066 / NBRC 105507 / MRE50).